Reading from the N-terminus, the 251-residue chain is Triosephosphate isomerase (251 aa).

9 to 11 serves as a coordination point for substrate; the sequence is NWK. Histidine 94 functions as the Electrophile in the catalytic mechanism. Glutamate 166 (proton acceptor) is an active-site residue. Substrate contacts are provided by residues glycine 172, serine 211, and 232 to 233; that span reads GG.

Belongs to the triosephosphate isomerase family. Homodimer.

It is found in the cytoplasm. The catalysed reaction is D-glyceraldehyde 3-phosphate = dihydroxyacetone phosphate. Its pathway is carbohydrate biosynthesis; gluconeogenesis. It functions in the pathway carbohydrate degradation; glycolysis; D-glyceraldehyde 3-phosphate from glycerone phosphate: step 1/1. Its function is as follows. Involved in the gluconeogenesis. Catalyzes stereospecifically the conversion of dihydroxyacetone phosphate (DHAP) to D-glyceraldehyde-3-phosphate (G3P). This is Triosephosphate isomerase from Xanthomonas oryzae pv. oryzae (strain MAFF 311018).